The sequence spans 410 residues: Transcription factor PHYTOCHROME INTERACTING FACTOR-LIKE 13 (410 aa).

A compositionally biased stretch (low complexity) spans 82–92 (AAAAAGPSSHH). Disordered regions lie at residues 82–110 (AAAAAGPSSHHAPPPDLPPPAARPPMRSG) and 137–225 (CRDA…AEVH). Residues 93–104 (APPPDLPPPAAR) show a composition bias toward pro residues. A compositionally biased stretch (basic and acidic residues) spans 187–197 (GREDSDSRSED). Over residues 209 to 219 (SSRRYGSKRRT) the composition is skewed to basic residues. The tract at residues 220–233 (RAAEVHNLSERRRR) is basic motif. Positions 220 to 269 (RAAEVHNLSERRRRDRINEKMRALQELIPHCNKTDKASILDEAIEYLKSL) constitute a bHLH domain. A helix-loop-helix motif region spans residues 234-269 (DRINEKMRALQELIPHCNKTDKASILDEAIEYLKSL). The segment at 357–410 (PFLHPDGWQTVPPQVSGPYASGPQVAQQNQIPKASASTVLPNSGAEQPPTSDGI) is disordered. The segment covering 380–410 (QVAQQNQIPKASASTVLPNSGAEQPPTSDGI) has biased composition (polar residues).

Belongs to the bHLH protein family. Interacts with PRR1. Interacts with LF. As to expression, highly expressed in the node portions of the stem. Expressed in the leaves and the basal part of shoots.

It is found in the nucleus. Functionally, transcription factor that may act as negative regulator of phyB-dependent light signal transduction. Transcription activator that acts as a positive regulator of internode elongation. May function via regulation of cell wall-related genes. May play a role in a drought-associated growth-restriction mechanism in response to drought stress. This chain is Transcription factor PHYTOCHROME INTERACTING FACTOR-LIKE 13, found in Oryza sativa subsp. japonica (Rice).